The chain runs to 695 residues: Biosynthetic arginine decarboxylase 1 (695 aa).

K141 is modified (N6-(pyridoxal phosphate)lysine). A substrate-binding site is contributed by 332 to 342; it reads LDVGGGLGVDY.

Belongs to the Orn/Lys/Arg decarboxylase class-II family. SpeA subfamily. Mg(2+) serves as cofactor. It depends on pyridoxal 5'-phosphate as a cofactor.

It carries out the reaction L-arginine + H(+) = agmatine + CO2. In terms of biological role, catalyzes the biosynthesis of agmatine from arginine. This chain is Biosynthetic arginine decarboxylase 1 (speA1), found in Synechocystis sp. (strain ATCC 27184 / PCC 6803 / Kazusa).